We begin with the raw amino-acid sequence, 158 residues long: NAD(P)H-quinone oxidoreductase subunit J, chloroplastic (158 aa).

The protein belongs to the complex I 30 kDa subunit family. As to quaternary structure, NDH is composed of at least 16 different subunits, 5 of which are encoded in the nucleus.

Its subcellular location is the plastid. It is found in the chloroplast thylakoid membrane. It catalyses the reaction a plastoquinone + NADH + (n+1) H(+)(in) = a plastoquinol + NAD(+) + n H(+)(out). It carries out the reaction a plastoquinone + NADPH + (n+1) H(+)(in) = a plastoquinol + NADP(+) + n H(+)(out). Its function is as follows. NDH shuttles electrons from NAD(P)H:plastoquinone, via FMN and iron-sulfur (Fe-S) centers, to quinones in the photosynthetic chain and possibly in a chloroplast respiratory chain. The immediate electron acceptor for the enzyme in this species is believed to be plastoquinone. Couples the redox reaction to proton translocation, and thus conserves the redox energy in a proton gradient. In Cryptomeria japonica (Japanese cedar), this protein is NAD(P)H-quinone oxidoreductase subunit J, chloroplastic.